Consider the following 225-residue polypeptide: Pathogenesis-related 5 protein Jun a 3.0101 (225 aa).

The signal sequence occupies residues 1-26; the sequence is MARVSELAFLLAATLAISLHMQEAGV. 8 disulfide bridges follow: Cys-35–Cys-224, Cys-76–Cys-86, Cys-91–Cys-97, Cys-139–Cys-213, Cys-144–Cys-197, Cys-152–Cys-162, Cys-166–Cys-175, and Cys-176–Cys-184. IgE-binding stretches follow at residues 146–157, 158–170, and 178–191; these read ADINAVCPSELK, VDGG…NVFK, and NAYV…NYSK.

Belongs to the thaumatin family. As to expression, expressed in pollen (at protein level).

This is Pathogenesis-related 5 protein Jun a 3.0101 from Juniperus ashei (Ozark white cedar).